The primary structure comprises 396 residues: Elongation factor Tu (396 aa).

The tr-type G domain maps to 10–206 (KPHVNVGTIG…ALDSYIPTPE (197 aa)). The G1 stretch occupies residues 19-26 (GHVDHGKT). 19–26 (GHVDHGKT) contributes to the GTP binding site. Thr26 is a Mg(2+) binding site. The segment at 60–64 (GITIN) is G2. Residues 81 to 84 (DCPG) form a G3 region. Residues 81–85 (DCPGH) and 136–139 (NKCD) contribute to the GTP site. Residues 136 to 139 (NKCD) form a G4 region. The segment at 174–176 (SAK) is G5.

This sequence belongs to the TRAFAC class translation factor GTPase superfamily. Classic translation factor GTPase family. EF-Tu/EF-1A subfamily. As to quaternary structure, monomer.

The protein localises to the cytoplasm. The catalysed reaction is GTP + H2O = GDP + phosphate + H(+). Functionally, GTP hydrolase that promotes the GTP-dependent binding of aminoacyl-tRNA to the A-site of ribosomes during protein biosynthesis. In Herminiimonas arsenicoxydans, this protein is Elongation factor Tu.